The chain runs to 234 residues: Orotidine 5'-phosphate decarboxylase (234 aa).

Substrate is bound by residues Asp-10, Lys-32, 59 to 68 (DLKLHDIPTT), Thr-122, Arg-184, Gln-193, Gly-213, and Arg-214. Lys-61 serves as the catalytic Proton donor.

This sequence belongs to the OMP decarboxylase family. Type 1 subfamily. In terms of assembly, homodimer.

The catalysed reaction is orotidine 5'-phosphate + H(+) = UMP + CO2. It functions in the pathway pyrimidine metabolism; UMP biosynthesis via de novo pathway; UMP from orotate: step 2/2. In terms of biological role, catalyzes the decarboxylation of orotidine 5'-monophosphate (OMP) to uridine 5'-monophosphate (UMP). This is Orotidine 5'-phosphate decarboxylase from Bacillus pumilus (strain SAFR-032).